Here is a 938-residue protein sequence, read N- to C-terminus: Protein zds1 (938 aa).

A compositionally biased stretch (polar residues) spans 1-13 (MSSSSVSNTLSIE). Disordered stretches follow at residues 1-140 (MSSS…LDKE), 326-386 (HRGK…VENQ), and 424-807 (SENK…EPKT). Over residues 40 to 54 (LSGSSSEPLENNSSL) the composition is skewed to low complexity. Positions 57-67 (STDDPSVEIRS) are enriched in basic and acidic residues. Polar residues predominate over residues 77–86 (NLLSDQNITI). A compositionally biased stretch (low complexity) spans 116–126 (SDAQSSVPSFS). Basic and acidic residues predominate over residues 127-140 (EIHDGMSEEELDKE). 2 stretches are compositionally biased toward polar residues: residues 330 to 349 (TSTL…TDTS) and 370 to 380 (TSALSNSQNPS). Low complexity predominate over residues 429–440 (ESAVASESSLSE). Basic and acidic residues-rich tracts occupy residues 467 to 485 (NKAE…DKSE) and 512 to 556 (NKAE…KADD). Over residues 558-567 (LPSNNKTEGY) the composition is skewed to polar residues. A compositionally biased stretch (pro residues) spans 587–596 (VIPPRVPTPV). The segment covering 622–635 (SSKKPEIFHERHIP) has biased composition (basic and acidic residues). The segment covering 642–669 (NKPSKNNILKSTQVPVTPKQKSSTANKG) has biased composition (polar residues). Basic residues predominate over residues 702 to 711 (KEHKKDKQKK). A compositionally biased stretch (low complexity) spans 715–725 (QISSSSKSASS). Over residues 798 to 807 (SDEKSTEPKT) the composition is skewed to basic and acidic residues.

The protein resides in the cytoplasm. Has a role in establishing cell polarity. Also required for maintenance of cell wall integrity, sexual differentiation, calcium tolerance and cell morphology. Involved in Ras-MAPK signaling pathway at cell cortex. Has a role in meiosis. This is Protein zds1 (zds1) from Schizosaccharomyces pombe (strain 972 / ATCC 24843) (Fission yeast).